Consider the following 111-residue polypeptide: Large ribosomal subunit protein uL22 (111 aa).

The protein belongs to the universal ribosomal protein uL22 family. As to quaternary structure, part of the 50S ribosomal subunit.

Its function is as follows. This protein binds specifically to 23S rRNA; its binding is stimulated by other ribosomal proteins, e.g. L4, L17, and L20. It is important during the early stages of 50S assembly. It makes multiple contacts with different domains of the 23S rRNA in the assembled 50S subunit and ribosome. The globular domain of the protein is located near the polypeptide exit tunnel on the outside of the subunit, while an extended beta-hairpin is found that lines the wall of the exit tunnel in the center of the 70S ribosome. The protein is Large ribosomal subunit protein uL22 of Acholeplasma laidlawii (strain PG-8A).